The chain runs to 295 residues: Protease HtpX (295 aa).

The next 2 membrane-spanning stretches (helical) occupy residues 4–24 (ILLF…TLSL) and 41–61 (SQLL…SLFI). H147 is a Zn(2+) binding site. The active site involves E148. H151 is a Zn(2+) binding site. 2 consecutive transmembrane segments (helical) span residues 158-178 (VTLA…ARII) and 199-219 (IATI…VMWF). E224 lines the Zn(2+) pocket.

Belongs to the peptidase M48B family. The cofactor is Zn(2+).

The protein localises to the cell inner membrane. The sequence is that of Protease HtpX from Pseudomonas fluorescens (strain Pf0-1).